The chain runs to 753 residues: Transcription factor SOX-30 (753 aa).

Disordered regions lie at residues 1 to 45 (MERA…TLSA) and 137 to 161 (AKKQ…TGPR). Residues 7–23 (EPPPQPRPLRPAPPPLP) show a composition bias toward pro residues. A DNA-binding region (HMG box) is located at residues 337 to 405 (VKRPMNAFMV…KHREEFPGWV (69 aa)). Disordered stretches follow at residues 514–575 (TGPS…SPCP) and 726–753 (PTST…LRDL). Composition is skewed to polar residues over residues 531-563 (TVKQ…STIQ) and 726-739 (PTST…VNVT).

Interacts with CTNNB1, competitively inhibiting CTNNB1-TCF7L2/TCF4 interaction.

The protein resides in the nucleus. It is found in the cytoplasm. In terms of biological role, acts both as a transcriptional activator and a repressor. Binds to the DNA sequence 5'-ACAAT-3' and shows a preference for guanine residues surrounding this core motif. Binds to its own promoter and activates its own transcription. Required to activate the expression of postmeiotic genes involved in spermiogenesis. Binds to the promoter region of CTNNB1 and represses its transcription which leads to inhibition of Wnt signaling. Also inhibits Wnt signaling by binding to the CTNNB1 protein, preventing interaction of CTNNB1 with TCF7L2/TCF4. This chain is Transcription factor SOX-30 (SOX30), found in Homo sapiens (Human).